The sequence spans 669 residues: Coagulation factor XIII B chain (669 aa).

The signal sequence occupies residues 1-21 (MMTLRHLPFILLLILSGELYA). 10 Sushi domains span residues 25-89 (QCDF…PRCY), 90-149 (KKCL…SCRK), 152-211 (ETCL…QCNK), 212-270 (LMCS…ICEG), 273-330 (NRCP…KCIE), 335-392 (VACE…ECVE), 395-453 (ENCK…VCLE), 454-517 (PCTI…PMCI), 523-581 (GMCA…SCLE), and 582-648 (PCTL…PKCT). Intrachain disulfides connect C26–C77, C60–C88, C92–C136, C119–C147, C154–C198, C181–C209, C214–C256, C242–C268, C275–C317, C303–C328, C337–C379, C365–C390, C397–C440, C426–C451, C455–C506, C487–C516, C525–C568, C554–C579, C583–C637, and C617–C647. N163 is a glycosylation site (N-linked (GlcNAc...) asparagine). N546 carries an N-linked (GlcNAc...) asparagine glycan.

As to quaternary structure, tetramer of two A chains (F13A1) and two B (F13B) chains. In terms of tissue distribution, predominantly expressed in liver and kidney.

It is found in the secreted. The B chain of factor XIII is not catalytically active, but is thought to stabilize the A subunits and regulate the rate of transglutaminase formation by thrombin. This Mus musculus (Mouse) protein is Coagulation factor XIII B chain (F13b).